The primary structure comprises 822 residues: Adhesion G protein-coupled receptor E2 (822 aa).

Positions 1-18 (MGGRVFLAFCVWLTLLGA) are cleaved as a signal peptide. Over 19–530 (ETQDSRDCAR…DVQEEDPVLT (512 aa)) the chain is Extracellular. Residues 22–63 (DSRDCARWCPENSSCVNATACRCNPGFSSSSEIFTSPTEICD) form the EGF-like 1 domain. 5 disulfides stabilise this stretch: C26/C36, C30/C42, C44/C62, C68/C82, and C76/C91. Residues N33 and N38 are each glycosylated (N-linked (GlcNAc...) asparagine). Residues 64-103 (DINECVPPSKVSCGKSSDCRNTEGSYDCVCNPGYELVSGA) enclose the EGF-like 1; calcium-binding domain. The N-linked (GlcNAc...) asparagine glycan is linked to N108. Positions 116 to 159 (DVDECQQNPRLCKSYGTCVNTLGSFTCQCLPGFKFKPEDPKLCT) constitute an EGF-like 2; calcium-binding domain. Disulfide bonds link C120-C133, C127-C142, C144-C158, C164-C177, and C171-C186. The EGF-like 3; calcium-binding domain occupies 160-198 (DVNECTSGQNPCHSSTHCLNNVGSYQCRCRPGWQPIPGS). 7 N-linked (GlcNAc...) asparagine glycosylation sites follow: N203, N222, N351, N371, N427, N449, and N453. Residues 209–247 (DVDECSSGLHQCDNSTVCFNTVGSYTCRCRPGWEPKHGI) form the EGF-like 4; calcium-binding domain. 2 disulfide bridges follow: C213-C226 and C220-C235. Residues 351–523 (NFSYPAGTEF…AVLMAPYDVQ (173 aa)) enclose the GAIN-B domain. Intrachain disulfides connect C475–C505 and C493–C507. The segment at 475 to 523 (CVFWEHGQNGCGHWATTGCSTMDTRDTSTICRCTHLSSFAVLMAPYDVQ) is GPS. A helical membrane pass occupies residues 531–551 (VITYMGLSLSLLCLLLAALTF). At 552–562 (LLCKAIQNIST) the chain is on the cytoplasmic side. A helical membrane pass occupies residues 563–583 (SLHLQLSLCLLLAHLLFLVAI). At 584–589 (DRTEHE) the chain is on the extracellular side. A helical transmembrane segment spans residues 590–610 (VLCAIIASALHYLYLAAFTWM). The Cytoplasmic segment spans residues 611–637 (LLEALYLFLTARNLMVVNYSSINRFTK). Residues 638-658 (KLMFPVAYGVPAVTVAISAAS) form a helical membrane-spanning segment. Over 659 to 676 (RPHLYGTPSRCWLQPEKG) the chain is Extracellular. A helical membrane pass occupies residues 677–697 (FIWGFLGPVCAIFSVNLALLL). Over 698 to 728 (VTLWILKNRLSSLNNEVSTLQNTRMLAFKAT) the chain is Cytoplasmic. A helical transmembrane segment spans residues 729 to 749 (AQLFILGCTWCLGILQVGPAA). Over 750-753 (RVMA) the chain is Extracellular. A helical transmembrane segment spans residues 754-774 (YLFTIINSLQGVFIFLVYCLL). Residues 775 to 822 (SQQVREQYRKWSKGFRKLRTESEMHTLSSSAKRDTPKPSTPGLLGLQS) lie on the Cytoplasmic side of the membrane. The segment at 797–822 (EMHTLSSSAKRDTPKPSTPGLLGLQS) is disordered.

This sequence belongs to the G-protein coupled receptor 2 family. Adhesion G-protein coupled receptor (ADGR) subfamily. In terms of assembly, forms a heterodimer, consisting of a large extracellular region non-covalently linked to a seven-transmembrane moiety. Interacts with chondroitin sulfate; the interaction with chondroitin sulfate is calcium-dependent. Interacts with CD55. In terms of processing, autoproteolytically cleaved into 2 subunits, an extracellular alpha subunit and a seven-transmembrane beta subunit.

Its subcellular location is the cell membrane. It is found in the cell projection. It localises to the ruffle membrane. Functionally, cell surface receptor that binds to the chondroitin sulfate moiety of glycosaminoglycan chains and promotes cell attachment. Promotes granulocyte chemotaxis, degranulation and adhesion. In macrophages, promotes the release of inflammatory cytokines, including IL8 and TNF. Signals probably through G-proteins. This chain is Adhesion G protein-coupled receptor E2 (ADGRE2), found in Macaca mulatta (Rhesus macaque).